A 602-amino-acid chain; its full sequence is 4-hydroxy-3-methylbut-2-en-1-yl diphosphate synthase (flavodoxin) (602 aa).

[4Fe-4S] cluster-binding residues include Cys-508, Cys-511, Cys-543, and Glu-550.

Belongs to the IspG family. [4Fe-4S] cluster is required as a cofactor.

It catalyses the reaction (2E)-4-hydroxy-3-methylbut-2-enyl diphosphate + oxidized [flavodoxin] + H2O + 2 H(+) = 2-C-methyl-D-erythritol 2,4-cyclic diphosphate + reduced [flavodoxin]. Its pathway is isoprenoid biosynthesis; isopentenyl diphosphate biosynthesis via DXP pathway; isopentenyl diphosphate from 1-deoxy-D-xylulose 5-phosphate: step 5/6. Functionally, converts 2C-methyl-D-erythritol 2,4-cyclodiphosphate (ME-2,4cPP) into 1-hydroxy-2-methyl-2-(E)-butenyl 4-diphosphate. The polypeptide is 4-hydroxy-3-methylbut-2-en-1-yl diphosphate synthase (flavodoxin) (Chlamydia trachomatis serovar L2 (strain ATCC VR-902B / DSM 19102 / 434/Bu)).